Here is a 445-residue protein sequence, read N- to C-terminus: GTPase Der (445 aa).

EngA-type G domains follow at residues 3–167 and 180–353; these read PVIA…YADQ and IKIA…AAAM. Residues 9-16, 56-60, 119-122, 186-193, 233-237, and 298-301 contribute to the GTP site; these read GRPNVGKS, DTGGF, NKAE, DTAGL, and NKWD. The KH-like domain occupies 354–438; it reads AKLPTPKLTR…PLRIEFRSST (85 aa).

The protein belongs to the TRAFAC class TrmE-Era-EngA-EngB-Septin-like GTPase superfamily. EngA (Der) GTPase family. In terms of assembly, associates with the 50S ribosomal subunit.

Its function is as follows. GTPase that plays an essential role in the late steps of ribosome biogenesis. The sequence is that of GTPase Der from Burkholderia multivorans (strain ATCC 17616 / 249).